The sequence spans 218 residues: Ras-related protein RabT2 (218 aa).

32–39 is a GTP binding site; that stretch reads GDYKTGKG. The short motif at 54-61 is the Effector region element; that stretch reads VSSIGVDF. Residues 80 to 84 and 140 to 143 each bind GTP; these read DANSC and NKCD. Cys-215 bears the Cysteine methyl ester mark. Cys-215 carries the S-geranylgeranyl cysteine lipid modification. Positions 216–218 are cleaved as a propeptide — removed in mature form; the sequence is NIL.

This sequence belongs to the small GTPase superfamily. Rab family.

The protein localises to the cell membrane. The protein is Ras-related protein RabT2 (rabT2) of Dictyostelium discoideum (Social amoeba).